Consider the following 309-residue polypeptide: MPIRVLDELPAVNFLREENVFVMTTSRASGQEIRPLKVLILNLMPKKIETENQFLRLLSNSPLQVDVQLLRIDARESRNTPAEHLNNFYCNFEDICDQNFDGLIVTGAPLGLVEFNDVAYWPQIKQVLEWAKDHVTSTLFVCWAVQAALNILYGIPKQTRTDKLSGVYEHHILHPHALLTRGFDDSFLAPHSRYADFPAALIRDYTDLEILAETEDGDAYLFASKDKRIAFVTGHPEYDAHTLASEYFRDVEAGLSPNVPYNYFPKNDPQNKPRATWRSHGNLLFTNWLNYYVYQITPYDLRHMNPTLD.

The active-site Acyl-thioester intermediate is Cys142. Substrate-binding residues include Lys163 and Ser192. The active-site Proton acceptor is His235. Glu237 is an active-site residue. Position 249 (Arg249) interacts with substrate.

It belongs to the MetA family.

Its subcellular location is the cytoplasm. It carries out the reaction L-homoserine + succinyl-CoA = O-succinyl-L-homoserine + CoA. The protein operates within amino-acid biosynthesis; L-methionine biosynthesis via de novo pathway; O-succinyl-L-homoserine from L-homoserine: step 1/1. Functionally, transfers a succinyl group from succinyl-CoA to L-homoserine, forming succinyl-L-homoserine. The polypeptide is Homoserine O-succinyltransferase (Citrobacter koseri (strain ATCC BAA-895 / CDC 4225-83 / SGSC4696)).